A 641-amino-acid chain; its full sequence is Putative phagocytic receptor 1a (641 aa).

An N-terminal signal peptide occupies residues 1–23; the sequence is MKINKKQIVFFILFSIFLNHVNG. The Extracellular segment spans residues 24-279; the sequence is IFYLPGMIPH…ESNDNSVHWF (256 aa). A helical membrane pass occupies residues 280–300; the sequence is SILNSLMIVFILTVMVAMIII. At 301–349 the chain is on the cytoplasmic side; that stretch reads RTLKKDIRRYTSIDTSEDRDSQEETGWKMIHGDVFRPPSHPMLLSVCIG. The helical transmembrane segment at 350-370 threads the bilayer; it reads SGVQIFSMTLITMIFAVLGFL. Over 371 to 374 the chain is Extracellular; the sequence is SPAN. Residues 375–395 form a helical membrane-spanning segment; sequence IGGLATALIVLFVLSAMFAGY. The Cytoplasmic portion of the chain corresponds to 396–413; the sequence is FSTRVFTIFKGRNWKKNT. The helical transmembrane segment at 414 to 434 threads the bilayer; the sequence is IYTALSMPGIIFGIFFFVNMF. The Extracellular portion of the chain corresponds to 435–445; that stretch reads LRGAKSSAAVP. Residues 446–466 traverse the membrane as a helical segment; sequence FGTFASIIAMWFGISVPLVFL. The Cytoplasmic portion of the chain corresponds to 467-502; the sequence is GSYFASKKPVPEDPVRTNQIPRQVPDQIWYMNPYLS. A helical transmembrane segment spans residues 503–523; that stretch reads ILMGGILPFGAVFIELHFILT. Topologically, residues 524-532 are extracellular; that stretch reads SLWDNQFYY. Residues 533 to 553 traverse the membrane as a helical segment; sequence IFGFLFIVLMILIVTSAEISI. Residues 554-578 are Cytoplasmic-facing; sequence VMCYFQLCAEDHHWWWRSFLTAGSS. A helical membrane pass occupies residues 579-599; it reads SLYMFIYSVSFFRYLGITKFI. At 600 to 608 the chain is on the extracellular side; the sequence is SSLLDFSYS. Residues 609 to 629 traverse the membrane as a helical segment; the sequence is FIMSLAFAALTGTIGFYSCYF. Residues 630-641 are Cytoplasmic-facing; that stretch reads LVRKIYSSIHIN.

Belongs to the nonaspanin (TM9SF) (TC 9.A.2) family.

It localises to the membrane. Functionally, involved in adhesion, phagocytosis of hydrophilic particles and intracellular killing of bacteria. Associates with proteins harboring glycine-rich transmembrane domains and ensures their efficient localization to the cell surface. This Dictyostelium discoideum (Social amoeba) protein is Putative phagocytic receptor 1a (phg1a).